The primary structure comprises 704 residues: Fibulin-1 (704 aa).

The first 25 residues, M1–G25, serve as a signal peptide directing secretion. 35 disulfide bridges follow: C33-C59, C34-C66, C47-C67, C76-C107, C89-C108, C110-C134, C111-C141, C124-C142, C181-C191, C187-C200, C202-C215, C221-C234, C228-C243, C249-C261, C267-C280, C274-C289, C295-C307, C313-C326, C320-C335, C342-C355, C361-C374, C368-C383, C385-C398, C404-C416, C412-C425, C427-C440, C446-C455, C451-C464, C466-C480, C486-C499, C495-C508, C510-C524, C530-C543, C537-C552, and C557-C578. 3 Anaphylatoxin-like domains span residues C33 to H74, Y75 to Y109, and C110 to C142. N96 carries an N-linked (GlcNAc...) asparagine glycan. Residues L177–E216 enclose the EGF-like 1 domain. The EGF-like 2; calcium-binding domain maps to D217–K262. One can recognise an EGF-like 3; calcium-binding domain in the interval D263–I308. Positions D309 to V356 constitute an EGF-like 4; calcium-binding domain. The EGF-like 5; calcium-binding domain maps to D357 to I399. Residues D357–E441 form a self-association and FN1-binding region. The region spanning D400 to E441 is the EGF-like 6; calcium-binding domain. One can recognise an EGF-like 7; calcium-binding domain in the interval D442–E481. The EGF-like 8; calcium-binding domain maps to D482–Q525. Residues D526–I579 enclose the EGF-like 9; calcium-binding domain. Residues N536 and N540 are each glycosylated (N-linked (GlcNAc...) asparagine).

It belongs to the fibulin family. As to quaternary structure, homomultimerizes and interacts with various extracellular matrix components.

The protein resides in the secreted. Its subcellular location is the extracellular space. It is found in the extracellular matrix. Incorporated into fibronectin-containing matrix fibers. May play a role in cell adhesion and migration along protein fibers within the extracellular matrix (ECM). Could be important for certain developmental processes and contribute to the supramolecular organization of ECM architecture, in particular to those of basement membranes. The sequence is that of Fibulin-1 (FBLN1) from Gallus gallus (Chicken).